A 1186-amino-acid polypeptide reads, in one-letter code: Syntaxin-binding protein 5-like (1186 aa).

N-acetylmethionine is present on Met1. Residues 15 to 40 (ASSPGSGSSSGSNSGGGAGSGSVHPA) are disordered. Positions 16 to 26 (SSPGSGSSSGS) are enriched in low complexity. WD repeat units lie at residues 74 to 107 (TALA…CYCQ), 114 to 153 (VLQL…SLKF), 158 to 194 (ITYC…GYVI), 213 to 247 (HLSD…ELRV), 253 to 285 (IHSI…PSRP), 307 to 349 (PILK…KAIT), 357 to 391 (IVEF…VVDL), 413 to 490 (TCTA…YKLK), 518 to 629 (QMIY…ELVI), and 643 to 705 (TSLA…IADN). Thr568 carries the phosphothreonine modification. 3 positions are modified to phosphoserine: Ser574, Ser589, and Ser593. The residue at position 596 (Thr596) is a Phosphothreonine. Ser599 is modified (phosphoserine). Residue Arg709 is modified to Omega-N-methylarginine. The span at 748–769 (TSDHVNGHCTSPTSQSCSSGKR) shows a compositional bias: polar residues. The interval 748–771 (TSDHVNGHCTSPTSQSCSSGKRLS) is disordered. Residues Ser763, Ser765, Ser766, Ser771, Ser772, Ser793, Ser800, Ser812, Ser820, Ser822, and Ser823 each carry the phosphoserine modification. WD repeat units follow at residues 832-889 (ITAL…SGTF), 898-969 (TFSC…QTCL), 974-1018 (ITET…LDVN), and 1032-1055 (CFTN…TYSQ). Position 1093 is a phosphothreonine (Thr1093). Residues 1121-1181 (SIEGMKGAAG…HELMLKYKDK (61 aa)) enclose the v-SNARE coiled-coil homology domain.

Belongs to the WD repeat L(2)GL family. As to quaternary structure, interacts with STX1A and STX4. Phosphorylated, leading to STXBP5L increased turnover and subsequent de-repression of insulin secretion. Phosphorylated on serine residues in response to glucose or phorbol esters. Post-translationally, ubiquitinated by the E3 ligase SYVN1, leading to STXBP5L proteasomal degradation. In terms of tissue distribution, detected in kidney, hippocampus and lung carcinoma.

The protein resides in the cytoplasm. It localises to the cell membrane. Its subcellular location is the membrane. Functionally, plays a role in vesicle trafficking and exocytosis inhibition. In pancreatic beta-cells, inhibits insulin secretion probably by interacting with and regulating STX1A and STX4, key t-SNARE proteins involved in the fusion of insulin granules to the plasma membrane. Also plays a role in neurotransmitter release by inhibiting basal acetylcholine release from axon terminals and by preventing synaptic fatigue upon repetitive stimulation. Promotes as well axonal outgrowth. The chain is Syntaxin-binding protein 5-like (STXBP5L) from Homo sapiens (Human).